Consider the following 1470-residue polypeptide: Rap guanine nucleotide exchange factor (1470 aa).

Disordered regions lie at residues 130–227 (PTEP…SYND) and 250–313 (HRRE…GGFM). The span at 173–183 (MPPPPVPPRPL) shows a compositional bias: pro residues. Composition is skewed to low complexity over residues 184–193 (RLPQTAAKGP) and 215–224 (TTSSSSSNTS). Residues 256-266 (NSVGGQAQNGI) are compositionally biased toward polar residues. Positions 275–292 (RSTASSTTTEGETASNEG) are enriched in low complexity. An a nucleoside 3',5'-cyclic phosphate-binding site is contributed by 347 to 463 (AFAALPMSIK…IEKDRDGLTG (117 aa)). The 115-residue stretch at 478-592 (CGQVLIKGKP…SLLNIACSVK (115 aa)) folds into the N-terminal Ras-GEF domain. The 83-residue stretch at 597 to 679 (QVILTRRKDD…LTLMLKNNVL (83 aa)) folds into the PDZ domain. Positions 782-869 (PEHVLKIYRN…SRYYLKNNSR (88 aa)) constitute a Ras-associating domain. The region spanning 894 to 1124 (NAQVVAAQLT…FENSNVATMR (231 aa)) is the Ras-GEF domain. A compositionally biased stretch (polar residues) spans 1176-1189 (QTAHRGANSSSTAN). Disordered regions lie at residues 1176–1213 (QTAH…DQSS), 1253–1326 (KVKG…NIPP), 1347–1370 (VIPT…PASS), and 1422–1455 (ATLP…RMGT). Residues 1198–1211 (PSSLSSQSAGSADQ) show a composition bias toward low complexity. Polar residues-rich tracts occupy residues 1260–1274 (QITS…SLQR) and 1282–1308 (RQAT…YQSD). Positions 1309 to 1321 (NGRRQRSGSEGRF) are enriched in basic and acidic residues. Low complexity predominate over residues 1349–1370 (PTHPHGHSPTSPRCRSRSPASS).

This sequence belongs to the RAPGEF2 family. Expressed in hermaphrodite-specific neurons (HSNs), oviduct sheath cells and lateral seam cells.

In terms of biological role, acts as a guanine nucleotide exchange factor for small G protein GTPases like rap-1 and rap-2. Required in the hypodermis, especially in the seam cells, for proper formation of the cuticle. The protein is Rap guanine nucleotide exchange factor (pxf-1) of Caenorhabditis elegans.